The chain runs to 230 residues: NAD(P)H-hydrate epimerase (230 aa).

Positions 11–218 constitute a YjeF N-terminal domain; that stretch reads AIDVDQELFT…ALQRKYELNL (208 aa). 61–65 provides a ligand contact to (6S)-NADPHX; that stretch reads NNGGD. Residues Asn-62 and Asp-126 each coordinate K(+). (6S)-NADPHX is bound by residues 130-136 and Asp-159; that span reads GFSFKPP. Ser-162 contacts K(+).

This sequence belongs to the NnrE/AIBP family. Requires K(+) as cofactor.

It carries out the reaction (6R)-NADHX = (6S)-NADHX. The enzyme catalyses (6R)-NADPHX = (6S)-NADPHX. Catalyzes the epimerization of the S- and R-forms of NAD(P)HX, a damaged form of NAD(P)H that is a result of enzymatic or heat-dependent hydration. This is a prerequisite for the S-specific NAD(P)H-hydrate dehydratase to allow the repair of both epimers of NAD(P)HX. This is NAD(P)H-hydrate epimerase from Drosophila erecta (Fruit fly).